The following is a 638-amino-acid chain: Intron-encoded RNA maturase bI4 (638 aa).

The tract at residues 1 to 253 is COB exons 1 to 4 encoded; it reads MAFRKSNVYL…VFYSPNTLGQ (253 aa). The segment at 253–638 is COB intron 4 encoded; the sequence is QNMALLLITY…LKFNEKWNNN (386 aa).

It in the C-terminal section; belongs to the LAGLIDADG endonuclease family. As to quaternary structure, forms a ternary complex with intron derived RNA and the imported mitochondrial leucyl-tRNA synthetase NAM2. The proteins do not interact directly with each other. Post-translationally, the mature protein may arise from proteolytic cleavage of an in-frame translation of COB exons 1 to 4 plus intron 4, containing the bI4 open reading frame. Cleavage would take place close to the Met-385 resulting in an active maturase of about 30 kDa.

Its subcellular location is the mitochondrion. Its function is as follows. Mitochondrial mRNA maturase required for splicing of intron 4 of the cytochrome b (COB) gene, containing its own coding sequence, and intron 4 in COX1, coding for the related homing endonuclease aI4. In vivo splicing requires in addition the imported mitochondrial leucyl-tRNA synthetase NAM2. Both proteins seem to stimulate the intrinsic ribozyme activity of intron bI4 through binding to and stabilizing specific secondary and tertiary structure elements in the RNA. The sequence is that of Intron-encoded RNA maturase bI4 (BI4) from Saccharomyces cerevisiae (strain ATCC 204508 / S288c) (Baker's yeast).